Reading from the N-terminus, the 82-residue chain is DNA-directed RNA polymerase subunit Rpo5 (82 aa).

It belongs to the archaeal Rpo5/eukaryotic RPB5 RNA polymerase subunit family. Part of the RNA polymerase complex.

It localises to the cytoplasm. The catalysed reaction is RNA(n) + a ribonucleoside 5'-triphosphate = RNA(n+1) + diphosphate. DNA-dependent RNA polymerase (RNAP) catalyzes the transcription of DNA into RNA using the four ribonucleoside triphosphates as substrates. This is DNA-directed RNA polymerase subunit Rpo5 from Pyrococcus horikoshii (strain ATCC 700860 / DSM 12428 / JCM 9974 / NBRC 100139 / OT-3).